Reading from the N-terminus, the 418-residue chain is Tyrosine--tRNA ligase (418 aa).

L-tyrosine is bound at residue Tyr-34. The 'HIGH' region signature appears at 39–48 (PTADSLHLGH). Tyr-169 and Gln-173 together coordinate L-tyrosine. The 'KMSKS' region signature appears at 229–233 (KFGKS). Lys-232 is an ATP binding site. The region spanning 352-418 (LNLVDMLVTA…GKKKYAVLTY (67 aa)) is the S4 RNA-binding domain.

Belongs to the class-I aminoacyl-tRNA synthetase family. TyrS type 1 subfamily. Homodimer.

Its subcellular location is the cytoplasm. It catalyses the reaction tRNA(Tyr) + L-tyrosine + ATP = L-tyrosyl-tRNA(Tyr) + AMP + diphosphate + H(+). Catalyzes the attachment of tyrosine to tRNA(Tyr) in a two-step reaction: tyrosine is first activated by ATP to form Tyr-AMP and then transferred to the acceptor end of tRNA(Tyr). The polypeptide is Tyrosine--tRNA ligase (Streptococcus pyogenes serotype M18 (strain MGAS8232)).